Here is a 318-residue protein sequence, read N- to C-terminus: Lipid A biosynthesis acyltransferase (318 aa).

The helical transmembrane segment at 27–47 (PQYWGIWLGIFFLLLLAFVPF) threads the bilayer. The short motif at 145–150 (HGWAID) is the HXXXXD motif element.

This sequence belongs to the LpxL/LpxM/LpxP family. LpxM subfamily.

It is found in the cell inner membrane. The enzyme catalyses an alpha-Kdo-(2-&gt;4)-alpha-Kdo-(2-&gt;6)-(acyl)-lipid IVA + a fatty acyl-[ACP] = an alpha-Kdo-(2-&gt;4)-alpha-Kdo-(2-&gt;6)-lipid A + holo-[ACP]. Its pathway is glycolipid biosynthesis; KDO(2)-lipid A biosynthesis; KDO(2)-lipid A from CMP-3-deoxy-D-manno-octulosonate and lipid IV(A): step 4/4. It participates in bacterial outer membrane biogenesis; lipopolysaccharide biosynthesis. Its function is as follows. Catalyzes the transfer of an acyl chain from an acyl-[acyl-carrier-protein] (ACP) to a Kdo(2)-(acyl)-lipid IV(A) to form a Kdo(2)-lipid A. The polypeptide is Lipid A biosynthesis acyltransferase (Haemophilus influenzae (strain ATCC 51907 / DSM 11121 / KW20 / Rd)).